We begin with the raw amino-acid sequence, 117 residues long: Immunoglobulin kappa variable 1D-16 (117 aa).

An N-terminal signal peptide occupies residues 1 to 22 (MDMRVLAQLLGLLLLCFPGARC). The framework-1 stretch occupies residues 23–45 (DIQMTQSPSSLSASVGDRVTITC). The Ig-like domain maps to 24 to 117 (IQMTQSPSSL…YYCQQYNSYP (94 aa)). Residues C45 and C110 are joined by a disulfide bond. Positions 46-56 (RASQGISSWLA) are complementarity-determining-1. The framework-2 stretch occupies residues 57–71 (WYQQKPEKAPKSLIY). The complementarity-determining-2 stretch occupies residues 72–78 (AASSLQS). The interval 79-110 (GVPSRFSGSGSGTDFTLTISSLQPEDFATYYC) is framework-3. The complementarity-determining-3 stretch occupies residues 111-117 (QQYNSYP).

Immunoglobulins are composed of two identical heavy chains and two identical light chains; disulfide-linked.

Its subcellular location is the secreted. The protein localises to the cell membrane. V region of the variable domain of immunoglobulin light chains that participates in the antigen recognition. Immunoglobulins, also known as antibodies, are membrane-bound or secreted glycoproteins produced by B lymphocytes. In the recognition phase of humoral immunity, the membrane-bound immunoglobulins serve as receptors which, upon binding of a specific antigen, trigger the clonal expansion and differentiation of B lymphocytes into immunoglobulins-secreting plasma cells. Secreted immunoglobulins mediate the effector phase of humoral immunity, which results in the elimination of bound antigens. The antigen binding site is formed by the variable domain of one heavy chain, together with that of its associated light chain. Thus, each immunoglobulin has two antigen binding sites with remarkable affinity for a particular antigen. The variable domains are assembled by a process called V-(D)-J rearrangement and can then be subjected to somatic hypermutations which, after exposure to antigen and selection, allow affinity maturation for a particular antigen. This Homo sapiens (Human) protein is Immunoglobulin kappa variable 1D-16.